The chain runs to 206 residues: Small ribosomal subunit protein uS4 (206 aa).

Positions Thr-96–Lys-156 constitute an S4 RNA-binding domain.

It belongs to the universal ribosomal protein uS4 family. As to quaternary structure, part of the 30S ribosomal subunit. Contacts protein S5. The interaction surface between S4 and S5 is involved in control of translational fidelity.

One of the primary rRNA binding proteins, it binds directly to 16S rRNA where it nucleates assembly of the body of the 30S subunit. In terms of biological role, with S5 and S12 plays an important role in translational accuracy. In Shewanella sp. (strain ANA-3), this protein is Small ribosomal subunit protein uS4.